Here is a 468-residue protein sequence, read N- to C-terminus: ATP synthase subunit beta (468 aa).

155–162 (GGAGVGKT) is a binding site for ATP.

This sequence belongs to the ATPase alpha/beta chains family. F-type ATPases have 2 components, CF(1) - the catalytic core - and CF(0) - the membrane proton channel. CF(1) has five subunits: alpha(3), beta(3), gamma(1), delta(1), epsilon(1). CF(0) has three main subunits: a(1), b(2) and c(9-12). The alpha and beta chains form an alternating ring which encloses part of the gamma chain. CF(1) is attached to CF(0) by a central stalk formed by the gamma and epsilon chains, while a peripheral stalk is formed by the delta and b chains.

It localises to the cell membrane. It carries out the reaction ATP + H2O + 4 H(+)(in) = ADP + phosphate + 5 H(+)(out). Functionally, produces ATP from ADP in the presence of a proton gradient across the membrane. The catalytic sites are hosted primarily by the beta subunits. The chain is ATP synthase subunit beta from Streptococcus pyogenes serotype M49 (strain NZ131).